An 880-amino-acid chain; its full sequence is GRB2-associated and regulator of MAPK protein 2 (880 aa).

Positions Arg-12–Arg-320 are CABIT. 5 disordered regions span residues Pro-385 to Ser-407, Ile-461 to Val-483, Ser-527 to Ser-548, Ser-569 to Pro-611, and Ala-633 to Gln-713. Low complexity-rich tracts occupy residues Pro-640–Gly-663 and Gln-683–Ser-696. Ser-740 is modified (phosphoserine). The 65-residue stretch at Ser-813–Arg-877 folds into the SAM domain.

The protein belongs to the GAREM family.

Functionally, probable adapter protein that provides a critical link between cell surface epidermal growth factor receptor and the MAPK/ERK signaling pathway. The protein is GRB2-associated and regulator of MAPK protein 2 (Garem2) of Mus musculus (Mouse).